Reading from the N-terminus, the 132-residue chain is Large ribosomal subunit protein bL17 (132 aa).

Belongs to the bacterial ribosomal protein bL17 family. As to quaternary structure, part of the 50S ribosomal subunit. Contacts protein L32.

The polypeptide is Large ribosomal subunit protein bL17 (Shewanella sediminis (strain HAW-EB3)).